The following is a 469-amino-acid chain: Protein RUFY3 (469 aa).

2 positions are modified to phosphothreonine: threonine 5 and threonine 12. Phosphoserine is present on residues tyrosine 27, serine 34, and serine 49. Threonine 51 is subject to Phosphothreonine. At aspartate 53 the chain carries Phosphoserine. In terms of domain architecture, RUN spans aspartate 95–glutamate 227. 2 coiled-coil regions span residues asparagine 271 to glutamate 362 and lysine 422 to lysine 463. Residues serine 321–alanine 337 are compositionally biased toward basic and acidic residues. Residues serine 321–leucine 342 form a disordered region.

As to quaternary structure, interacts with PAK1. Interacts (via C-terminus) with Ras-related Rab-5 proteins. Interacts (via C-terminus) with Ras-related Rap-2 proteins. Interacts with PIK3CA and PIK3R1. Interacts (via N-terminus) with FSCN1; this interaction induces neuron axon development. Interacts with DBN1. Interacts (via the second coiled coil) with GTP-, but not GDP-bound ARL8A and ARL8B. Interacts with dynactin/DCTN1 and the dynein intermediate chain DYNC1I1/2. Directly interacts with DYNC1LI1. Phosphorylated by PAK1. Isoform 1 is partially phosphorylated. As to expression, expressed in brain (at protein level).

It localises to the cytoplasm. Its subcellular location is the endomembrane system. The protein localises to the cell projection. It is found in the invadopodium. The protein resides in the growth cone. It localises to the perikaryon. Its subcellular location is the filopodium. The protein localises to the lamellipodium. It is found in the lysosome. Its function is as follows. ARL8 effector that promotes the coupling of endolysosomes to dynein-dynactin for retrograde transport along microtubules. Acts by binding both GTP-bound ARL8 and dynein-dynactin. In nonneuronal cells, promotes concentration of endolysosomes in the juxtanuclear area. In hippocampal neurons, drives retrograde transport of endolysosomes from the axon to the soma. Plays a role in the generation of neuronal polarity formation and axon growth. Implicated in the formation of a single axon by developing neurons. May inhibit the formation of additional axons by inhibition of PI3K in minor neuronal processes. Plays a role in the formation of F-actin-enriched protrusive structures at the cell periphery. Plays a role in cytoskeletal organization by regulating the subcellular localization of FSCN1 and DBN1 at axonal growth cones. This chain is Protein RUFY3, found in Mus musculus (Mouse).